An 878-amino-acid chain; its full sequence is Phosphoenolpyruvate carboxylase (878 aa).

Active-site residues include His138 and Lys545.

Belongs to the PEPCase type 1 family. It depends on Mg(2+) as a cofactor.

The enzyme catalyses oxaloacetate + phosphate = phosphoenolpyruvate + hydrogencarbonate. In terms of biological role, forms oxaloacetate, a four-carbon dicarboxylic acid source for the tricarboxylic acid cycle. In Shewanella loihica (strain ATCC BAA-1088 / PV-4), this protein is Phosphoenolpyruvate carboxylase.